The following is a 212-amino-acid chain: Ribosomal RNA small subunit methyltransferase G (212 aa).

S-adenosyl-L-methionine is bound by residues Gly-80, Leu-85, 131–132, and Arg-146; that span reads AE.

The protein belongs to the methyltransferase superfamily. RNA methyltransferase RsmG family.

The protein resides in the cytoplasm. The catalysed reaction is guanosine(527) in 16S rRNA + S-adenosyl-L-methionine = N(7)-methylguanosine(527) in 16S rRNA + S-adenosyl-L-homocysteine. Functionally, specifically methylates the N7 position of guanine in position 527 of 16S rRNA. This is Ribosomal RNA small subunit methyltransferase G from Xanthomonas oryzae pv. oryzae (strain KACC10331 / KXO85).